Reading from the N-terminus, the 493-residue chain is Glutamate--tRNA ligase (493 aa).

Residues 10–20 (PSPTGDPHVGT) carry the 'HIGH' region motif. The 'KMSKS' region motif lies at 251-255 (KLSKR). K254 is a binding site for ATP.

The protein belongs to the class-I aminoacyl-tRNA synthetase family. Glutamate--tRNA ligase type 1 subfamily. Monomer.

Its subcellular location is the cytoplasm. The catalysed reaction is tRNA(Glu) + L-glutamate + ATP = L-glutamyl-tRNA(Glu) + AMP + diphosphate. Catalyzes the attachment of glutamate to tRNA(Glu) in a two-step reaction: glutamate is first activated by ATP to form Glu-AMP and then transferred to the acceptor end of tRNA(Glu). The protein is Glutamate--tRNA ligase of Marinomonas sp. (strain MWYL1).